Consider the following 433-residue polypeptide: Serine--tRNA ligase (433 aa).

L-serine is bound at residue 235-237 (TSE). Residue 266–268 (RSE) coordinates ATP. Glu-289 is an L-serine binding site. 353 to 356 (EISS) serves as a coordination point for ATP. Ser-388 is an L-serine binding site.

This sequence belongs to the class-II aminoacyl-tRNA synthetase family. Type-1 seryl-tRNA synthetase subfamily. Homodimer. The tRNA molecule binds across the dimer.

It localises to the cytoplasm. It carries out the reaction tRNA(Ser) + L-serine + ATP = L-seryl-tRNA(Ser) + AMP + diphosphate + H(+). The catalysed reaction is tRNA(Sec) + L-serine + ATP = L-seryl-tRNA(Sec) + AMP + diphosphate + H(+). The protein operates within aminoacyl-tRNA biosynthesis; selenocysteinyl-tRNA(Sec) biosynthesis; L-seryl-tRNA(Sec) from L-serine and tRNA(Sec): step 1/1. In terms of biological role, catalyzes the attachment of serine to tRNA(Ser). Is also able to aminoacylate tRNA(Sec) with serine, to form the misacylated tRNA L-seryl-tRNA(Sec), which will be further converted into selenocysteinyl-tRNA(Sec). The chain is Serine--tRNA ligase from Burkholderia cenocepacia (strain ATCC BAA-245 / DSM 16553 / LMG 16656 / NCTC 13227 / J2315 / CF5610) (Burkholderia cepacia (strain J2315)).